Reading from the N-terminus, the 283-residue chain is NAD kinase (283 aa).

The active-site Proton acceptor is the D66. Residues 66 to 67 (DG), R71, 137 to 138 (ND), H165, D167, and 178 to 183 (TGYSMS) contribute to the NAD(+) site.

It belongs to the NAD kinase family. It depends on a divalent metal cation as a cofactor.

The protein localises to the cytoplasm. It carries out the reaction NAD(+) + ATP = ADP + NADP(+) + H(+). Functionally, involved in the regulation of the intracellular balance of NAD and NADP, and is a key enzyme in the biosynthesis of NADP. Catalyzes specifically the phosphorylation on 2'-hydroxyl of the adenosine moiety of NAD to yield NADP. The sequence is that of NAD kinase from Agathobacter rectalis (strain ATCC 33656 / DSM 3377 / JCM 17463 / KCTC 5835 / VPI 0990) (Eubacterium rectale).